The sequence spans 137 residues: Glutamate mutase sigma subunit (137 aa).

A B12-binding domain is found at 3–137 (KKTIVLGVIG…ADMKEVLGVE (135 aa)). Residues 13–17 (SDCHA), H16, 61–63 (SSL), and 93–97 (NIVVG) each bind adenosylcob(III)alamin.

It belongs to the methylaspartate mutase GlmS subunit family. As to quaternary structure, heterotetramer composed of 2 epsilon subunits (GlmE) and 2 sigma subunits (GlmS). GlmE exists as a homodimer and GlmS as a monomer. Adenosylcob(III)alamin serves as cofactor.

The enzyme catalyses (2S,3S)-3-methyl-L-aspartate = L-glutamate. It participates in amino-acid degradation; L-glutamate degradation via mesaconate pathway; acetate and pyruvate from L-glutamate: step 1/4. Functionally, catalyzes the carbon skeleton rearrangement of L-glutamate to L-threo-3-methylaspartate ((2S,3S)-3-methylaspartate). This is Glutamate mutase sigma subunit from Clostridium tetanomorphum.